The chain runs to 185 residues: Coordinator of PRMT5 and differentiation stimulator (185 aa).

Position 1 is an N-acetylmethionine (methionine 1). The interval 1–109 (MDPPTAGAQS…MSGCLPKEQA (109 aa)) is disordered. Composition is skewed to basic and acidic residues over residues 42–52 (SSQEKATENAT) and 66–77 (SPAHGEGTHCEE). At serine 66 the chain carries Phosphoserine. A compositionally biased stretch (acidic residues) spans 78 to 89 (EGFAEDDEDSDG).

Interacts with PRMT5. Interacts with histone H4; specifically interacts with the N-terminus of histone H4 but not with histone H3. Interacts with CBFB. Found in a complex with PRMT5, RUNX1 and CBFB.

Its subcellular location is the nucleus. In terms of biological role, histone-binding protein required for histone H4 methyltransferase activity of PRMT5. Specifically required for histone H4 'Arg-3' methylation mediated by PRMT5, but not histone H3 'Arg-8' methylation, suggesting that it modulates the substrate specificity of PRMT5. Specifically interacts with the N-terminus of histone H4 but not with histone H3, suggesting that it acts by promoting the association between histone H4 and PRMT5. Involved in CCNE1 promoter repression. Plays a role in muscle cell differentiation by modulating the recruitment of PRMT5 to the promoter of genes involved in the coordination between cell cycle exit and muscle differentiation. This is Coordinator of PRMT5 and differentiation stimulator (COPRS) from Bos taurus (Bovine).